A 154-amino-acid chain; its full sequence is Large ribosomal subunit protein uL30 (154 aa).

This sequence belongs to the universal ribosomal protein uL30 family. Part of the 50S ribosomal subunit.

The chain is Large ribosomal subunit protein uL30 from Methanococcus vannielii.